The following is a 225-amino-acid chain: C-reactive protein (225 aa).

A signal peptide spans 1-19; the sequence is MAKLLLYFLLLTSLSDVFG. Positions 24-225 constitute a Pentraxin (PTX) domain; that stretch reads SKKTFVFPKE…EVFIKPQLWP (202 aa). Cys55 and Cys116 are oxidised to a cystine. The Ca(2+) site is built by Asn80, Gln158, Asp159, and Gln169.

Belongs to the pentraxin family. As to quaternary structure, homopentamer. Pentraxin (or pentaxin) have a discoid arrangement of 5 non-covalently bound subunits. Interacts with FCN1; may regulate monocyte activation by FCN1. Ca(2+) serves as cofactor. In terms of tissue distribution, found in plasma.

Its subcellular location is the secreted. In terms of biological role, displays several functions associated with host defense: it promotes agglutination, bacterial capsular swelling, phagocytosis and complement fixation through its calcium-dependent binding to phosphorylcholine. Can interact with DNA and histones and may scavenge nuclear material released from damaged circulating cells. This is C-reactive protein (CRP) from Cavia porcellus (Guinea pig).